A 131-amino-acid chain; its full sequence is Small ribosomal subunit protein eS8 (131 aa).

Positions 1-38 (MKLGAYYKGGDLKKPSGGKKRKVRRTKKKALGGGPPQI) are disordered. Positions 16-30 (SGGKKRKVRRTKKKA) are enriched in basic residues.

This sequence belongs to the eukaryotic ribosomal protein eS8 family. As to quaternary structure, part of the 30S ribosomal subunit.

This chain is Small ribosomal subunit protein eS8, found in Pyrobaculum arsenaticum (strain DSM 13514 / JCM 11321 / PZ6).